A 303-amino-acid chain; its full sequence is UDP-3-O-acyl-N-acetylglucosamine deacetylase (303 aa).

Zn(2+) contacts are provided by His78, His237, and Asp241. The active-site Proton donor is the His264.

Belongs to the LpxC family. Zn(2+) serves as cofactor.

It catalyses the reaction a UDP-3-O-[(3R)-3-hydroxyacyl]-N-acetyl-alpha-D-glucosamine + H2O = a UDP-3-O-[(3R)-3-hydroxyacyl]-alpha-D-glucosamine + acetate. Its pathway is glycolipid biosynthesis; lipid IV(A) biosynthesis; lipid IV(A) from (3R)-3-hydroxytetradecanoyl-[acyl-carrier-protein] and UDP-N-acetyl-alpha-D-glucosamine: step 2/6. Functionally, catalyzes the hydrolysis of UDP-3-O-myristoyl-N-acetylglucosamine to form UDP-3-O-myristoylglucosamine and acetate, the committed step in lipid A biosynthesis. The chain is UDP-3-O-acyl-N-acetylglucosamine deacetylase from Xanthomonas oryzae pv. oryzae (strain MAFF 311018).